The following is a 518-amino-acid chain: Glutamate--cysteine ligase (518 aa).

This sequence belongs to the glutamate--cysteine ligase type 1 family. Type 1 subfamily.

It carries out the reaction L-cysteine + L-glutamate + ATP = gamma-L-glutamyl-L-cysteine + ADP + phosphate + H(+). The protein operates within sulfur metabolism; glutathione biosynthesis; glutathione from L-cysteine and L-glutamate: step 1/2. This Klebsiella pneumoniae subsp. pneumoniae (strain ATCC 700721 / MGH 78578) protein is Glutamate--cysteine ligase.